Here is a 171-residue protein sequence, read N- to C-terminus: Crossover junction endodeoxyribonuclease RuvC (171 aa).

Active-site residues include Asp-7, Glu-66, and Asp-138. Mg(2+)-binding residues include Asp-7, Glu-66, and Asp-138.

Belongs to the RuvC family. Homodimer which binds Holliday junction (HJ) DNA. The HJ becomes 2-fold symmetrical on binding to RuvC with unstacked arms; it has a different conformation from HJ DNA in complex with RuvA. In the full resolvosome a probable DNA-RuvA(4)-RuvB(12)-RuvC(2) complex forms which resolves the HJ. Requires Mg(2+) as cofactor.

The protein localises to the cytoplasm. It catalyses the reaction Endonucleolytic cleavage at a junction such as a reciprocal single-stranded crossover between two homologous DNA duplexes (Holliday junction).. Functionally, the RuvA-RuvB-RuvC complex processes Holliday junction (HJ) DNA during genetic recombination and DNA repair. Endonuclease that resolves HJ intermediates. Cleaves cruciform DNA by making single-stranded nicks across the HJ at symmetrical positions within the homologous arms, yielding a 5'-phosphate and a 3'-hydroxyl group; requires a central core of homology in the junction. The consensus cleavage sequence is 5'-(A/T)TT(C/G)-3'. Cleavage occurs on the 3'-side of the TT dinucleotide at the point of strand exchange. HJ branch migration catalyzed by RuvA-RuvB allows RuvC to scan DNA until it finds its consensus sequence, where it cleaves and resolves the cruciform DNA. The sequence is that of Crossover junction endodeoxyribonuclease RuvC from Thiobacillus denitrificans (strain ATCC 25259 / T1).